An 81-amino-acid chain; its full sequence is Cysteine-rich and transmembrane domain-containing protein PCC1 (81 aa).

Positions 1-22 (MNQSAQNYFSVQKPSETSSGPY) are enriched in polar residues. The segment at 1 to 34 (MNQSAQNYFSVQKPSETSSGPYTSPPPIGYPTRD) is disordered. A helical membrane pass occupies residues 56 to 74 (AIMSCFSTCMECIFCCGVC).

Belongs to the CYSTM1 family. Expressed at very low levels in seedlings and petioles, and at higher levels in leaves. Also present in phloem sap.

It is found in the cell membrane. Modulates resistance against pathogens including oomycetes (e.g. Hyaloperonospora parasitica and Phytophthora brassicae) and fungi (e.g. Phytophthora brassicae). Controls the abscisic acid-mediated (ABA) signaling pathways. Regulator of the flowering time in response to stress (e.g. UV-C). Regulates polar lipid content; promotes phosphatidylinositol (PI) and 18:0 but prevents 18:2 and 18:3 polar lipids accumulation. The protein is Cysteine-rich and transmembrane domain-containing protein PCC1 (PCC1) of Arabidopsis thaliana (Mouse-ear cress).